A 452-amino-acid chain; its full sequence is Phosphatidylinositol N-acetylglucosaminyltransferase GPI3 subunit (452 aa).

A helical transmembrane segment spans residues 407 to 427 (LYLLCGIVEYMLFFLLEWLYP).

Belongs to the glycosyltransferase group 1 family. Component of the phosphatidylinositol N-acetylglucosaminyltransferase complex composed of at least GPI1, GPI2, GPI3, GPI15, GPI19 and ERI1.

The protein localises to the endoplasmic reticulum membrane. The enzyme catalyses a 1,2-diacyl-sn-glycero-3-phospho-(1D-myo-inositol) + UDP-N-acetyl-alpha-D-glucosamine = a 6-(N-acetyl-alpha-D-glucosaminyl)-1-(1,2-diacyl-sn-glycero-3-phospho)-1D-myo-inositol + UDP + H(+). The protein operates within glycolipid biosynthesis; glycosylphosphatidylinositol-anchor biosynthesis. Its activity is regulated as follows. Inhibited by Ras, probably via the interaction between RAS2 and ERI1. Its function is as follows. Catalytic subunit in the complex catalyzing the transfer of N-acetylglucosamine from UDP-N-acetylglucosamine to phosphatidylinositol, the first step of GPI biosynthesis. This Saccharomyces cerevisiae (strain RM11-1a) (Baker's yeast) protein is Phosphatidylinositol N-acetylglucosaminyltransferase GPI3 subunit (SPT14).